A 336-amino-acid polypeptide reads, in one-letter code: Cytoskeleton protein RodZ (336 aa).

Residues 1–111 (MNTEATHDQN…LGKRRKKRDG (111 aa)) are Cytoplasmic-facing. Residues 19–71 (LRNAREQLGLSQQAVAERLCLKVSTVRDIEEDKAPADLASTFLRGYIRSYARL) form the HTH cro/C1-type domain. Positions 30 to 49 (QQAVAERLCLKVSTVRDIEE) form a DNA-binding region, H-T-H motif. The helical; Signal-anchor for type II membrane protein transmembrane segment at 112 to 132 (WLMTFTWLVLFVVIGLSGAWW) threads the bilayer. Over 133–336 (WQDHKAQQEE…TLNAEQSPAQ (204 aa)) the chain is Periplasmic. Residues 148-164 (DQSSAELNNNQSQSVPL) are compositionally biased toward polar residues. Residues 148-248 (DQSSAELNNN…TDQAGVTTPA (101 aa)) are disordered. Residues 165–201 (DTSTTTDQAMATTPTSPVDTTATNTQTPAATTAPSPT) show a composition bias toward low complexity. The span at 202-217 (VDSQQNAVVPPSQANV) shows a compositional bias: polar residues. Positions 219-236 (TAATPAPAATTMPDGAAP) are enriched in low complexity.

It belongs to the RodZ family.

It localises to the cell inner membrane. Cytoskeletal protein that is involved in cell-shape control through regulation of the length of the long axis. This chain is Cytoskeleton protein RodZ, found in Escherichia coli (strain SMS-3-5 / SECEC).